Here is a 137-residue protein sequence, read N- to C-terminus: Structural protein A137R (137 aa).

It belongs to the asfivirus A137R family. In terms of assembly, interacts with host TBK1.

Its subcellular location is the virion. It is found in the host cytoplasm. Plays a role in the inhibition of the host innate immune response. Mechanistically, promotes the autophagy-mediated lysosomal degradation of host TBK1 and affects IRF3 nuclear translocation to block type I IFN production. The protein is Structural protein A137R of Ornithodoros (relapsing fever ticks).